A 419-amino-acid chain; its full sequence is UDP-N-acetylglucosamine 1-carboxyvinyltransferase (419 aa).

22-23 (KN) is a phosphoenolpyruvate binding site. R93 serves as a coordination point for UDP-N-acetyl-alpha-D-glucosamine. C117 acts as the Proton donor in catalysis. Position 117 is a 2-(S-cysteinyl)pyruvic acid O-phosphothioketal (C117). 2 residues coordinate UDP-N-acetyl-alpha-D-glucosamine: D307 and I329.

This sequence belongs to the EPSP synthase family. MurA subfamily.

The protein localises to the cytoplasm. The catalysed reaction is phosphoenolpyruvate + UDP-N-acetyl-alpha-D-glucosamine = UDP-N-acetyl-3-O-(1-carboxyvinyl)-alpha-D-glucosamine + phosphate. The protein operates within cell wall biogenesis; peptidoglycan biosynthesis. Functionally, cell wall formation. Adds enolpyruvyl to UDP-N-acetylglucosamine. In Shewanella sediminis (strain HAW-EB3), this protein is UDP-N-acetylglucosamine 1-carboxyvinyltransferase.